The sequence spans 215 residues: High mobility group protein B1 (215 aa).

2 to 10 (GKGDPKKPR) is a heparin binding site. Positions 2–97 (GKGDPKKPRG…KFKDPNAPKR (96 aa)) are sufficient for interaction with HAVCR2. N6-acetyllysine is present on residues K3, K7, K8, and K12. The interval 3–15 (KGDPKKPRGKMSS) is LPS binding (delipidated). The HMG box 1 DNA-binding region spans 9–79 (PRGKMSSYAF…RYEREMKTYI (71 aa)). The residue at position 23 (C23) is a Cysteine sulfonic acid (-SO3H); alternate. A disulfide bond links C23 and C45. The short motif at 27 to 43 (HKKKHPDASVNFSEFSK) is the Nuclear localization signal (NLS) 1 element. Residues K28, K29, and K30 each carry the N6-acetyllysine modification. Residue K28 forms an Isoglutamyl lysine isopeptide (Lys-Gln) (interchain with Q-?) linkage. At S35 the chain carries Phosphoserine. K43 is modified (N6-acetyllysine). Residues K43 and K44 each participate in an isoglutamyl lysine isopeptide (Lys-Gln) (interchain with Q-?) cross-link. The residue at position 45 (C45) is a Cysteine sulfonic acid (-SO3H); alternate. K68 is covalently cross-linked (Isoglutamyl lysine isopeptide (Lys-Gln) (interchain with Q-?)). The segment at 76 to 95 (KTYIPPKGETKKKFKDPNAP) is disordered. The interval 80 to 96 (PPKGETKKKFKDPNAPK) is LPS binding (Lipid A). A compositionally biased stretch (basic and acidic residues) spans 83 to 94 (GETKKKFKDPNA). The tract at residues 89–108 (FKDPNAPKRPPSAFFLFCSE) is cytokine-stimulating activity. K90 carries the N6-acetyllysine modification. A DNA-binding region (HMG box 2) is located at residues 95–163 (PKRPPSAFFL…KYEKDIAAYR (69 aa)). S100 is subject to Phosphoserine. Cysteine sulfonic acid (-SO3H) is present on C106. An N6-acetyllysine mark is found at K127, K128, K141, K172, K173, K177, and K180. A binding to AGER/RAGE region spans residues 150–183 (KLKEKYEKDIAAYRAKGKPDAAKKGVVKAEKSKK). Basic and acidic residues predominate over residues 161-179 (AYRAKGKPDAAKKGVVKAE). Positions 161–215 (AYRAKGKPDAAKKGVVKAEKSKKKKEEEEDEEDEEDEEEEEDEEDEEEEEDDDDE) are disordered. The short motif at 178 to 184 (AEKSKKK) is the Nuclear localization signal (NLS) 2 element. Residue K180 forms an Isoglutamyl lysine isopeptide (Lys-Gln) (interchain with Q-?) linkage. S181 carries the post-translational modification ADP-ribosylserine. N6-acetyllysine occurs at positions 182, 183, 184, and 185. Isoglutamyl lysine isopeptide (Lys-Gln) (interchain with Q-?) cross-links involve residues K182, K183, and K184. Acidic residues predominate over residues 187-215 (EEEDEEDEEDEEEEEDEEDEEEEEDDDDE).

This sequence belongs to the HMGB family. As to quaternary structure, interacts (fully reduced HMGB1) with CXCL12; probably in a 1:2 ratio involving two molecules of CXCL12, each interacting with one HMG box of HMGB1; inhibited by glycyrrhizin. Associates with the TLR4:LY96 receptor complex. Component of the RAG complex composed of core components RAG1 and RAG2, and associated component HMGB1 or HMGB2. Interacts (in cytoplasm upon starvation) with BECN1; inhibits the interaction of BECN1 and BCL2 leading to promotion of autophagy. Interacts with KPNA1; involved in nuclear import. Interacts with AGER. Interacts with SREBF1, TLR2, TLR4, TLR9, PTPRZ1, APEX1, FEN1, POLB, TERT. Interacts with IL1B, MSH2, XPA, XPC, HNF1A, TP53. Interacts with CD24; the probable CD24:SIGLEC10 complex is proposed to inhibit HGMB1-mediated tissue damage immune response. Interacts with THBD; prevents HGMB1 interaction with ACER/RAGE and inhibits HGMB1 pro-inflammatory activity. Interacts with HAVCR2; impairs HMGB1 binding to B-DNA and likely HMGB1-mediated innate immune response. Interacts with XPO1; mediating nuclear export. Interacts with receptor RAGE/AGER. Phosphorylated at serine residues. Phosphorylation in both NLS regions is required for cytoplasmic translocation followed by secretion. Post-translationally, acetylated on multiple sites upon stimulation with LPS. Acetylation on lysine residues in the nuclear localization signals (NLS 1 and NLS 2) leads to cytoplasmic localization and subsequent secretion. Acetylation on Lys-3 results in preferential binding to DNA ends and impairs DNA bending activity. In terms of processing, reduction/oxidation of cysteine residues Cys-23, Cys-45 and Cys-106 and a possible intramolecular disulfide bond involving Cys-23 and Cys-45 give rise to different redox forms with specific functional activities in various cellular compartments: 1- fully reduced HMGB1 (HMGB1C23hC45hC106h), 2- disulfide HMGB1 (HMGB1C23-C45C106h) and 3- sulfonyl HMGB1 (HMGB1C23soC45soC106so). Poly-ADP-ribosylated by PARP1 when secreted following stimulation with LPS. Post-translationally, in vitro cleavage by CASP1 is liberating a HMG box 1-containing peptide which may mediate immunogenic activity; the peptide antagonizes apoptosis-induced immune tolerance. Can be proteolytically cleaved by a thrombin:thrombomodulin complex; reduces binding to heparin and pro-inflammatory activities. In terms of processing, forms covalent cross-links mediated by transglutaminase TGM2, between a glutamine and the epsilon-amino group of a lysine residue, forming homopolymers and heteropolymers.

It is found in the nucleus. The protein localises to the chromosome. It localises to the cytoplasm. Its subcellular location is the secreted. The protein resides in the cell membrane. It is found in the endosome. The protein localises to the endoplasmic reticulum-Golgi intermediate compartment. Its function is as follows. Multifunctional redox sensitive protein with various roles in different cellular compartments. In the nucleus is one of the major chromatin-associated non-histone proteins and acts as a DNA chaperone involved in replication, transcription, chromatin remodeling, V(D)J recombination, DNA repair and genome stability. Proposed to be an universal biosensor for nucleic acids. Promotes host inflammatory response to sterile and infectious signals and is involved in the coordination and integration of innate and adaptive immune responses. In the cytoplasm functions as a sensor and/or chaperone for immunogenic nucleic acids implicating the activation of TLR9-mediated immune responses, and mediates autophagy. Acts as a danger-associated molecular pattern (DAMP) molecule that amplifies immune responses during tissue injury. Released to the extracellular environment can bind DNA, nucleosomes, IL-1 beta, CXCL12, AGER isoform 2/sRAGE, lipopolysaccharide (LPS) and lipoteichoic acid (LTA), and activates cells through engagement of multiple surface receptors. In the extracellular compartment fully reduced HMGB1 (released by necrosis) acts as a chemokine, disulfide HMGB1 (actively secreted) as a cytokine, and sulfonyl HMGB1 (released from apoptotic cells) promotes immunological tolerance. Has proangiogenic activity. May be involved in platelet activation. Binds to phosphatidylserine and phosphatidylethanolamide. Bound to RAGE mediates signaling for neuronal outgrowth. May play a role in accumulation of expanded polyglutamine (polyQ) proteins. Functionally, nuclear functions are attributed to fully reduced HGMB1. Associates with chromatin and binds DNA with a preference to non-canonical DNA structures such as single-stranded DNA, DNA-containing cruciforms or bent structures, supercoiled DNA and ZDNA. Can bent DNA and enhance DNA flexibility by looping thus providing a mechanism to promote activities on various gene promoters by enhancing transcription factor binding and/or bringing distant regulatory sequences into close proximity. May be involved in nucleotide excision repair (NER), mismatch repair (MMR) and base excision repair (BER) pathways, and double strand break repair such as non-homologous end joining (NHEJ). Involved in V(D)J recombination by acting as a cofactor of the RAG complex: acts by stimulating cleavage and RAG protein binding at the 23 bp spacer of conserved recombination signal sequences (RSS). In vitro can displace histone H1 from highly bent DNA. Can restructure the canonical nucleosome leading to relaxation of structural constraints for transcription factor-binding. Enhances binding of sterol regulatory element-binding proteins (SREBPs) such as SREBF1 to their cognate DNA sequences and increases their transcriptional activities. Facilitates binding of TP53 to DNA. May be involved in mitochondrial quality control and autophagy in a transcription-dependent fashion implicating HSPB1. Can modulate the activity of the telomerase complex and may be involved in telomere maintenance. In the cytoplasm proposed to dissociate the BECN1:BCL2 complex via competitive interaction with BECN1 leading to autophagy activation. Involved in oxidative stress-mediated autophagy. Can protect BECN1 and ATG5 from calpain-mediated cleavage and thus proposed to control their proautophagic and proapoptotic functions and to regulate the extent and severity of inflammation-associated cellular injury. In myeloid cells has a protective role against endotoxemia and bacterial infection by promoting autophagy. Involved in endosomal translocation and activation of TLR9 in response to CpG-DNA in macrophages. In terms of biological role, in the extracellular compartment (following either active secretion or passive release)involved in regulation of the inflammatory response. Fully reduced HGMB1 (which subsequently gets oxidized after release) in association with CXCL12 mediates the recruitment of inflammatory cells during the initial phase of tissue injury; the CXCL12:HMGB1 complex triggers CXCR4 homodimerization. Induces the migration of monocyte-derived immature dendritic cells and seems to regulate adhesive and migratory functions of neutrophils implicating AGER/RAGE and ITGAM. Can bind to various types of DNA and RNA including microbial unmethylated CpG-DNA to enhance the innate immune response to nucleic acids. Proposed to act in promiscuous DNA/RNA sensing which cooperates with subsequent discriminative sensing by specific pattern recognition receptors. Promotes extracellular DNA-induced AIM2 inflammasome activation implicating AGER/RAGE. Disulfide HMGB1 binds to transmembrane receptors, such as AGER/RAGE, TLR2, TLR4 and probably TREM1, thus activating their signal transduction pathways. Mediates the release of cytokines/chemokines such as TNF, IL-1, IL-6, IL-8, CCL2, CCL3, CCL4 and CXCL10. Promotes secretion of interferon-gamma by macrophage-stimulated natural killer (NK) cells in concert with other cytokines like IL-2 or IL-12. TLR4 is proposed to be the primary receptor promoting macrophage activation and signaling through TLR4 seems to implicate LY96/MD-2. In bacterial LPS- or LTA-mediated inflammatory responses binds to the endotoxins and transfers them to CD14 for signaling to the respective TLR4:LY96 and TLR2 complexes. Contributes to tumor proliferation by association with ACER/RAGE. Can bind to IL1-beta and signals through the IL1R1:IL1RAP receptor complex. Binding to class A CpG activates cytokine production in plasmacytoid dendritic cells implicating TLR9, MYD88 and AGER/RAGE and can activate autoreactive B cells. Via HMGB1-containing chromatin immune complexes may also promote B cell responses to endogenous TLR9 ligands through a B-cell receptor (BCR)-dependent and ACER/RAGE-independent mechanism. Inhibits phagocytosis of apoptotic cells by macrophages; the function is dependent on poly-ADP-ribosylation and involves binding to phosphatidylserine on the cell surface of apoptotic cells. In adaptive immunity may be involved in enhancing immunity through activation of effector T-cells and suppression of regulatory T (TReg) cells. In contrast, without implicating effector or regulatory T-cells, required for tumor infiltration and activation of T-cells expressing the lymphotoxin LTA:LTB heterotrimer thus promoting tumor malignant progression. Also reported to limit proliferation of T-cells. Released HMGB1:nucleosome complexes formed during apoptosis can signal through TLR2 to induce cytokine production. Involved in induction of immunological tolerance by apoptotic cells; its pro-inflammatory activities when released by apoptotic cells are neutralized by reactive oxygen species (ROS)-dependent oxidation specifically on Cys-106. During macrophage activation by activated lymphocyte-derived self apoptotic DNA (ALD-DNA) promotes recruitment of ALD-DNA to endosomes. This is High mobility group protein B1 (HMGB1) from Bos taurus (Bovine).